The following is a 223-amino-acid chain: Probable iron-sulfur cluster repair protein HI_1677 (223 aa).

It belongs to the RIC family.

It is found in the cytoplasm. Di-iron-containing protein involved in the repair of iron-sulfur clusters. This Haemophilus influenzae (strain ATCC 51907 / DSM 11121 / KW20 / Rd) protein is Probable iron-sulfur cluster repair protein HI_1677.